Here is a 350-residue protein sequence, read N- to C-terminus: 4-hydroxy-3-methylbut-2-en-1-yl diphosphate synthase (flavodoxin) (350 aa).

The [4Fe-4S] cluster site is built by C263, C266, C298, and E305.

Belongs to the IspG family. The cofactor is [4Fe-4S] cluster.

It catalyses the reaction (2E)-4-hydroxy-3-methylbut-2-enyl diphosphate + oxidized [flavodoxin] + H2O + 2 H(+) = 2-C-methyl-D-erythritol 2,4-cyclic diphosphate + reduced [flavodoxin]. The protein operates within isoprenoid biosynthesis; isopentenyl diphosphate biosynthesis via DXP pathway; isopentenyl diphosphate from 1-deoxy-D-xylulose 5-phosphate: step 5/6. In terms of biological role, converts 2C-methyl-D-erythritol 2,4-cyclodiphosphate (ME-2,4cPP) into 1-hydroxy-2-methyl-2-(E)-butenyl 4-diphosphate. The chain is 4-hydroxy-3-methylbut-2-en-1-yl diphosphate synthase (flavodoxin) from Nautilia profundicola (strain ATCC BAA-1463 / DSM 18972 / AmH).